A 64-amino-acid polypeptide reads, in one-letter code: Large ribosomal subunit protein bL35 (64 aa).

Disordered regions lie at residues 1–22 (MPKAKTHSGASKRFRRTGTGKI) and 34–64 (EHKPTTRTRRLEGRTTVSANDTKRVNSLLNG). Residues 34 to 46 (EHKPTTRTRRLEG) show a composition bias toward basic and acidic residues. Over residues 50-64 (VSANDTKRVNSLLNG) the composition is skewed to polar residues.

Belongs to the bacterial ribosomal protein bL35 family.

The sequence is that of Large ribosomal subunit protein bL35 from Mycolicibacterium paratuberculosis (strain ATCC BAA-968 / K-10) (Mycobacterium paratuberculosis).